The chain runs to 253 residues: E3 ubiquitin-protein ligase MARCHF3 (253 aa).

An RING-CH-type zinc finger spans residues 63–123; it reads SPFNDRPMCR…ELCHFRFAVE (61 aa). Zn(2+)-binding residues include Cys-71, Cys-74, Cys-87, Cys-89, His-97, Cys-100, Cys-113, and Cys-116. 2 consecutive transmembrane segments (helical) span residues 145–165 and 182–202; these read LFGDMVCFLFITPLATISGWL and AVGLIALTVALFTIYLFWTLV. Residues Ser-237 and Ser-243 each carry the phosphoserine modification.

In terms of assembly, interacts with MARCHF2 and STX6.

It localises to the cytoplasmic vesicle membrane. The protein resides in the early endosome membrane. The catalysed reaction is S-ubiquitinyl-[E2 ubiquitin-conjugating enzyme]-L-cysteine + [acceptor protein]-L-lysine = [E2 ubiquitin-conjugating enzyme]-L-cysteine + N(6)-ubiquitinyl-[acceptor protein]-L-lysine.. It functions in the pathway protein modification; protein ubiquitination. Its function is as follows. E3 ubiquitin-protein ligase which may be involved in endosomal trafficking. E3 ubiquitin ligases accept ubiquitin from an E2 ubiquitin-conjugating enzyme in the form of a thioester and then directly transfer the ubiquitin to targeted substrates. The polypeptide is E3 ubiquitin-protein ligase MARCHF3 (MARCHF3) (Bos taurus (Bovine)).